Consider the following 553-residue polypeptide: Keratin, type II cytoskeletal 73 (553 aa).

The tract at residues 1-130 (MNRQFTCKSG…DPEIQKVRAQ (130 aa)) is head. The segment at 131 to 166 (EREQIKALNNKFASFIDKVRFLEQQNQVLQTKWELL) is coil 1A. Residues 131 to 444 (EREQIKALNN…KLLEGEECRM (314 aa)) enclose the IF rod domain. A linker 1 region spans residues 167–185 (QQLDLSNCRRNLEPVYEAH). The interval 186-277 (ISSLQKQLDS…CLYEGEITQM (92 aa)) is coil 1B. Positions 278 to 301 (QSHISDTSVVLSMDNNRNLDLDSI) are linker 12. Residues 302–440 (IAEVRAQYED…ATYRKLLEGE (139 aa)) are coil 2. Positions 441–539 (ECRMSGEHTN…LGSPSKKTMR (99 aa)) are tail.

The protein belongs to the intermediate filament family. Heterotetramer of two type I and two type II keratins.

Functionally, has a role in hair formation. Specific component of keratin intermediate filaments in the inner root sheath (IRS) of the hair follicle. This is Keratin, type II cytoskeletal 73 (Krt73) from Rattus norvegicus (Rat).